Here is a 507-residue protein sequence, read N- to C-terminus: Cytochrome P450 3A28 (507 aa).

Cys442 is a heme binding site.

This sequence belongs to the cytochrome P450 family. It depends on heme as a cofactor.

The protein resides in the endoplasmic reticulum membrane. The protein localises to the microsome membrane. The enzyme catalyses an organic molecule + reduced [NADPH--hemoprotein reductase] + O2 = an alcohol + oxidized [NADPH--hemoprotein reductase] + H2O + H(+). Cytochromes P450 are a group of heme-thiolate monooxygenases. In liver microsomes, this enzyme is involved in an NADPH-dependent electron transport pathway. It oxidizes a variety of structurally unrelated compounds, including steroids, fatty acids, and xenobiotics. The polypeptide is Cytochrome P450 3A28 (CYP3A28) (Bos taurus (Bovine)).